Here is a 1393-residue protein sequence, read N- to C-terminus: MFGEGSRDNAALSKERLFDKLEIGIASDITIRDKWSCGEIKKPETINYRTFKPEKGGLFCEKIFGPTKDWECCCGKYKKIKHKGIVCDRCGVEVTLSKVRRERMAHIELAVPIVHIWFFKTTPSRIGNVLGMTASDLERIIYYEEYVVIDPGKTDLNKKQLLNDAQYREVVEKWGKDSFVAKMGGEAIYDLLKSEDLQSLLKELKDRLRKTKSQQARMKLAKRLKIIEGFVSSSNNPEWMVLKSIPVVPPDLRPLVPLDGGRFATSDLNDLYRRVINRNNRLKAILRLKTPEVIVRNEKRMLQEAVDALFDNGRHGHPVMGAGNRPLKSLSEMLKGKNGRFRQNLLGKRVDYSGRSVIIVGPELKFNQCGLPKEMALELFEPFIIKRLKDQGSVYTIRSAKKMIQRGAPEVWDVLEEIIKGHPVLLNRAPTLHRLGIQAFEPVLIEGKAIRVHPLVCAAFNADFDGDQMAVHVPLSIEAQLEAKVLMMAPDNIFLPSSGKPVATPSKDMTLGIYYLMADPTYFPEDHGGKIKIFKDVAEVLRALYAGGFLDDRIDNRRDETGRGIHIHEKIKVRIDGQIIETTPGRVLFNRIVPKELGFQNYSMPSKRISELILQCYKKVGLEATVRFLDDLKDLGFIQATKAAISMGLKDVRIPEIKSDILKEAYDKVAVVKKQYDDGIITDGERHSKTISIWTEVSESLSDALYVEISKQTKSKHNPLYLMIDSGARGNKSQLKQLGALRGLMAKPNGAIIESPITSNFREGLTVLEYSISSHGARKGLADTALKTADSGYLTRRLVDVAQDVIITEKDCGTLNHIEISAIRQGSEELLPLKDRIYGRTVAEDIYQPGDKSKLLAKNGDVITSAQAELIDDAGIESIKIRSTLTCESRRGVCAKCYGLNLANGRLIGLGEAVGIIAAQSIGEPGTQLTMRTFHLGGIAATSSTPEIVTDCDGVLVYMDLRVVVGQDGNHLVLNKKGAIHVVRDEGRSLEEYKKLLSTKSIESLETYPVELGVKILVGDGEKVSAGQRIAEVELHNIPIICDKPGFVKYEDLVEGISTEKVVNKNTGLVELIVKQHRGELHPQIAIYSDAGLTELVGTYAIPSGAIISVEENQKVDPGMLLARLPRGAIKTKDITGGLPRVAELVEARKPEDAADIAKIDGVVDFKGIQKNKRILVVRDEITGMEEEHLIPLTKHLIVQRGDTVMKGQQLTDGLVVPHEILEICGVRELQKYLVNEVQEVYRLQGVDINDKHIEIIVRQMLQKVRITDPGDTTLLFGEEVNKKEFYEENRRTEEDGGKPAQAVPVLLGITKASLGTESFISAASFQDTTRVLTEAACSSKTDYLLGFKENVIMGHMIPGGTGFDTHKRIKQYLEKEQEDLVFDFVSESECAC.

Zn(2+) is bound by residues Cys-72, Cys-74, Cys-87, and Cys-90. The Mg(2+) site is built by Asp-463, Asp-465, and Asp-467. Zn(2+) is bound by residues Cys-812, Cys-887, Cys-894, and Cys-897.

This sequence belongs to the RNA polymerase beta' chain family. As to quaternary structure, the RNAP catalytic core consists of 2 alpha, 1 beta, 1 beta' and 1 omega subunit. When a sigma factor is associated with the core the holoenzyme is formed, which can initiate transcription. Mg(2+) is required as a cofactor. It depends on Zn(2+) as a cofactor.

The catalysed reaction is RNA(n) + a ribonucleoside 5'-triphosphate = RNA(n+1) + diphosphate. DNA-dependent RNA polymerase catalyzes the transcription of DNA into RNA using the four ribonucleoside triphosphates as substrates. The sequence is that of DNA-directed RNA polymerase subunit beta' from Chlamydia felis (strain Fe/C-56) (Chlamydophila felis).